We begin with the raw amino-acid sequence, 539 residues long: Eukaryotic translation initiation factor 3 subunit L (539 aa).

Residues 306 to 514 (TFSDILLYIQ…IHIADTKVSH (209 aa)) form the PCI domain.

Belongs to the eIF-3 subunit L family. In terms of assembly, component of the eukaryotic translation initiation factor 3 (eIF-3) complex. The eIF-3 complex interacts with pix.

The protein localises to the cytoplasm. Component of the eukaryotic translation initiation factor 3 (eIF-3) complex, which is involved in protein synthesis of a specialized repertoire of mRNAs and, together with other initiation factors, stimulates binding of mRNA and methionyl-tRNAi to the 40S ribosome. The eIF-3 complex specifically targets and initiates translation of a subset of mRNAs involved in cell proliferation. The sequence is that of Eukaryotic translation initiation factor 3 subunit L from Drosophila yakuba (Fruit fly).